Here is a 453-residue protein sequence, read N- to C-terminus: D-aminoacyl-tRNA deacylase (453 aa).

The disordered stretch occupies residues 428-453 (VRADVALHERPRERVRRPSDDEGKGN).

Belongs to the DtdA deacylase family. In terms of assembly, monomer. Requires Zn(2+) as cofactor.

The catalysed reaction is a D-aminoacyl-tRNA + H2O = a tRNA + a D-alpha-amino acid + H(+). The enzyme catalyses glycyl-tRNA(Ala) + H2O = tRNA(Ala) + glycine + H(+). Functionally, D-aminoacyl-tRNA deacylase with broad substrate specificity. By recycling D-aminoacyl-tRNA to D-amino acids and free tRNA molecules, this enzyme counteracts the toxicity associated with the formation of D-aminoacyl-tRNA entities in vivo. The protein is D-aminoacyl-tRNA deacylase of Halobacterium salinarum (strain ATCC 29341 / DSM 671 / R1).